The sequence spans 579 residues: Glypican-3 (579 aa).

Positions 1-24 (MAGTVRTACLLVAMLLGLGCLGQA) are cleaved as a signal peptide. Gln-25 carries the post-translational modification Pyrrolidone carboxylic acid. Cystine bridges form between Cys-34-Cys-71, Cys-64-Cys-261, Cys-72-Cys-264, Cys-196-Cys-348, Cys-251-Cys-284, Cys-273-Cys-421, and Cys-277-Cys-409. N-linked (GlcNAc...) asparagine glycosylation is found at Asn-123 and Asn-240. Residue Ser-351 is modified to Phosphoserine. Residue Asn-417 is glycosylated (N-linked (GlcNAc...) asparagine). Residues Ser-494 and Ser-508 are each glycosylated (O-linked (Xyl...) (glycosaminoglycan) serine). The disordered stretch occupies residues 533–552 (DAPGNKQHGNQKDNEITTSH). Ser-553 carries the GPI-anchor amidated serine lipid modification. Residues 554 to 579 (VGNMPSPLKILISVAIYVACFFFLVH) constitute a propeptide, removed in mature form.

The protein belongs to the glypican family. In terms of assembly, heterodimer; disulfide-linked. Cleavage by a furin-like convertase results in production of alpha and beta chains which form a disulfide-linked heterodimer. Interacts with DPP4. Interacts with FGF2. Interacts with WNT5A. Also interacts with WNT3A and WNT7B. Interacts with hedgehog protein SHH; the heparan sulfate chains are not required for the interaction. Also interacts with hedgehog protein IHH. Interacts with CD81. Interacts with Wnt receptors FZD4, FZD7 and FZD8; the heparan sulfate chains are required for the interaction. In terms of processing, O-glycosylated; contains heparan sulfate and/or chondroitin sulfate. Cleaved intracellularly by a furin-like convertase to generate 2 subunits, alpha and beta, which remain associated through disulfide bonds and are associated with the cell surface via the GPI-anchor. This processing is essential for its role in inhibition of hedgehog signaling. A second proteolytic event may result in cleavage of the protein on the cell surface, separating it from the GPI-anchor and leading to its shedding from the cell surface. In the developing limb, absent from the apical epidermal ridge at 11 dpc but highly expressed in the underlying mesenchyme. Expression in the mesenchyme at this stage is asymmetric with highest levels in the regions of the distal mesenchyme within the progress zone and within the proximal anterior and posterior limb bud. At later developmental stages including 12.5 and 13.5 dpc, expression is restricted to the interdigital webs and the regions of chondrocytic differentiation of the developing bones. In the embryonic kidney, expressed in both the ureteric bud and mesenchymal cells as early as 13.5 dpc. Expression at 16.5 dpc is similar to that at 13.5 dpc but decreases by 18.5 dpc.

The protein resides in the cell membrane. In terms of biological role, cell surface proteoglycan. Negatively regulates the hedgehog signaling pathway when attached via the GPI-anchor to the cell surface by competing with the hedgehog receptor PTC1 for binding to hedgehog proteins. Binding to the hedgehog protein SHH triggers internalization of the complex by endocytosis and its subsequent lysosomal degradation. Positively regulates the canonical Wnt signaling pathway by binding to the Wnt receptor Frizzled and stimulating the binding of the Frizzled receptor to Wnt ligands. Positively regulates the non-canonical Wnt signaling pathway. Binds to CD81 which decreases the availability of free CD81 for binding to the transcriptional repressor HHEX, resulting in nuclear translocation of HHEX and transcriptional repression. Inhibits the dipeptidyl peptidase activity of DPP4. Plays a role in limb patterning and skeletal development by controlling the cellular response to BMP4. Modulates the effects of growth factors BMP2, BMP7 and FGF7 on renal branching morphogenesis. Required for coronary vascular development. Plays a role in regulating cell movements during gastrulation. The chain is Glypican-3 (Gpc3) from Mus musculus (Mouse).